The chain runs to 1093 residues: Protein transport protein Sec24A (1093 aa).

4 disordered regions span residues 1 to 29 (MSQP…SGSP), 60 to 168 (HPIP…TSLT), 189 to 226 (GPSV…ALTP), and 294 to 328 (SLPP…TQTP). Composition is skewed to polar residues over residues 112–126 (ASQN…SSSF) and 138–168 (WQYN…TSLT). Composition is skewed to pro residues over residues 191-201 (SVPPLVNPPLP) and 209-221 (PHGP…PPPV). The segment covering 299–328 (YQNTTPPGATGVPPSSLNYPSGPQAFTQTP) has biased composition (polar residues). Residues Cys-431, Cys-434, Cys-452, and Cys-455 each coordinate Zn(2+). The interval 431–455 (CRSCRTYINPFVSFLDQRRWKCNLC) is zinc finger-like. The stretch at 966-1038 (PQPPILQLSV…TPESARIIAF (73 aa)) is one Gelsolin-like repeat.

The protein belongs to the SEC23/SEC24 family. SEC24 subfamily. In terms of assembly, COPII is composed of at least five proteins: the Sec23/24 complex, the Sec13/31 complex and Sar1. Interacts with TMED2. Interacts (as part of the Sec23/24 complex) with SEC22B; recruits SEC22B into COPII-coated vesicles for its transport from the endoplasmic reticulum to the Golgi. Interacts with STING1; promoting STING1 translocation to COPII vesicles in a STEEP1-dependent manner. Interacts with TMEM39A. Interacts with SACM1L; this interaction is reduced in the absence of TMEM39A. Interacts with kinase FAM20C; transport of FAM20C from the endoplasmic reticulum to the Golgi is likely to be mediated by COPII vesicles.

It localises to the cytoplasmic vesicle. It is found in the COPII-coated vesicle membrane. The protein localises to the endoplasmic reticulum membrane. The protein resides in the cytoplasm. Its subcellular location is the cytosol. Functionally, component of the coat protein complex II (COPII) which promotes the formation of transport vesicles from the endoplasmic reticulum (ER). The coat has two main functions, the physical deformation of the endoplasmic reticulum membrane into vesicles and the selection of cargo molecules for their transport to the Golgi complex. Plays a central role in cargo selection within the COPII complex and together with SEC24B may have a different specificity compared to SEC24C and SEC24D. May package preferentially cargos with cytoplasmic DxE or LxxLE motifs and may also recognize conformational epitopes. The chain is Protein transport protein Sec24A from Homo sapiens (Human).